The sequence spans 212 residues: Protein Rv0786c (212 aa).

The sequence is that of Protein Rv0786c from Mycobacterium tuberculosis (strain ATCC 25618 / H37Rv).